Reading from the N-terminus, the 1268-residue chain is ATP-dependent helicase/nuclease subunit A (1268 aa).

Positions 3 to 476 constitute a UvrD-like helicase ATP-binding domain; that stretch reads TKWTEEQELA…IMLYKNFRSR (474 aa). 24-31 contributes to the ATP binding site; the sequence is AAAGSGKT. Residues 528–824 enclose the UvrD-like helicase C-terminal domain; sequence IENLKVAGDI…RIMSIHKSKG (297 aa).

Belongs to the helicase family. AddA subfamily. Heterodimer of AddA and AddB/RexB. Mg(2+) is required as a cofactor.

It catalyses the reaction Couples ATP hydrolysis with the unwinding of duplex DNA by translocating in the 3'-5' direction.. The catalysed reaction is ATP + H2O = ADP + phosphate + H(+). Functionally, the heterodimer acts as both an ATP-dependent DNA helicase and an ATP-dependent, dual-direction single-stranded exonuclease. Recognizes the chi site generating a DNA molecule suitable for the initiation of homologous recombination. The AddA nuclease domain is required for chi fragment generation; this subunit has the helicase and 3' -&gt; 5' nuclease activities. In Clostridium perfringens (strain 13 / Type A), this protein is ATP-dependent helicase/nuclease subunit A.